A 219-amino-acid chain; its full sequence is Holliday junction branch migration complex subunit RuvA (219 aa).

The domain I stretch occupies residues M1–P67. The domain II stretch occupies residues D68–H146. Residues S147–P161 are flexible linker. The tract at residues I162–A219 is domain III.

Belongs to the RuvA family. Homotetramer. Forms an RuvA(8)-RuvB(12)-Holliday junction (HJ) complex. HJ DNA is sandwiched between 2 RuvA tetramers; dsDNA enters through RuvA and exits via RuvB. An RuvB hexamer assembles on each DNA strand where it exits the tetramer. Each RuvB hexamer is contacted by two RuvA subunits (via domain III) on 2 adjacent RuvB subunits; this complex drives branch migration. In the full resolvosome a probable DNA-RuvA(4)-RuvB(12)-RuvC(2) complex forms which resolves the HJ.

The protein localises to the cytoplasm. Its function is as follows. The RuvA-RuvB-RuvC complex processes Holliday junction (HJ) DNA during genetic recombination and DNA repair, while the RuvA-RuvB complex plays an important role in the rescue of blocked DNA replication forks via replication fork reversal (RFR). RuvA specifically binds to HJ cruciform DNA, conferring on it an open structure. The RuvB hexamer acts as an ATP-dependent pump, pulling dsDNA into and through the RuvAB complex. HJ branch migration allows RuvC to scan DNA until it finds its consensus sequence, where it cleaves and resolves the cruciform DNA. The polypeptide is Holliday junction branch migration complex subunit RuvA (Synechococcus sp. (strain CC9311)).